Here is a 213-residue protein sequence, read N- to C-terminus: High frequency lysogenization protein HflD (213 aa).

Residues 99–126 (LSSAKGALDTLGNRINGLQRQLEHFDLQ) adopt a coiled-coil conformation.

The protein belongs to the HflD family. As to quaternary structure, interacts with CII protein from phage lambda.

The protein localises to the cytoplasm. It is found in the cell inner membrane. Functionally, negative regulator of phage lambda lysogenization. Contributes to the degradation of the phage regulatory protein CII. Acts probably by holding CII on the membrane surface, away from the target promoters, but close to the FtsH protease. The polypeptide is High frequency lysogenization protein HflD (Escherichia coli O157:H7).